Reading from the N-terminus, the 154-residue chain is Fluoride-specific ion channel FluC 1 (154 aa).

4 helical membrane-spanning segments follow: residues valine 28–leucine 48, tryptophan 59–isoleucine 79, proline 91–serine 111, and leucine 124–alanine 144. Residues glycine 99 and threonine 102 each coordinate Na(+).

The protein belongs to the fluoride channel Fluc/FEX (TC 1.A.43) family.

The protein resides in the cell membrane. It catalyses the reaction fluoride(in) = fluoride(out). Na(+) is not transported, but it plays an essential structural role and its presence is essential for fluoride channel function. Functionally, fluoride-specific ion channel. Important for reducing fluoride concentration in the cell, thus reducing its toxicity. This is Fluoride-specific ion channel FluC 1 from Streptomyces coelicolor (strain ATCC BAA-471 / A3(2) / M145).